We begin with the raw amino-acid sequence, 127 residues long: Small ribosomal subunit protein uS13 (127 aa).

Positions 99–127 are disordered; the sequence is RGQRTRTNARTRRGRRGQAIGIKKKTLKK.

The protein belongs to the universal ribosomal protein uS13 family. Part of the 30S ribosomal subunit. Forms a loose heterodimer with protein S19. Forms two bridges to the 50S subunit in the 70S ribosome.

Its function is as follows. Located at the top of the head of the 30S subunit, it contacts several helices of the 16S rRNA. In the 70S ribosome it contacts the 23S rRNA (bridge B1a) and protein L5 of the 50S subunit (bridge B1b), connecting the 2 subunits; these bridges are implicated in subunit movement. Contacts the tRNAs in the A and P-sites. The protein is Small ribosomal subunit protein uS13 of Roseiflexus castenholzii (strain DSM 13941 / HLO8).